Consider the following 385-residue polypeptide: Tetraacyldisaccharide 4'-kinase (385 aa).

60 to 67 (TVGGSGKT) provides a ligand contact to ATP.

It belongs to the LpxK family.

The catalysed reaction is a lipid A disaccharide + ATP = a lipid IVA + ADP + H(+). It participates in glycolipid biosynthesis; lipid IV(A) biosynthesis; lipid IV(A) from (3R)-3-hydroxytetradecanoyl-[acyl-carrier-protein] and UDP-N-acetyl-alpha-D-glucosamine: step 6/6. Transfers the gamma-phosphate of ATP to the 4'-position of a tetraacyldisaccharide 1-phosphate intermediate (termed DS-1-P) to form tetraacyldisaccharide 1,4'-bis-phosphate (lipid IVA). The protein is Tetraacyldisaccharide 4'-kinase of Psychrobacter arcticus (strain DSM 17307 / VKM B-2377 / 273-4).